The following is a 406-amino-acid chain: Tryptophan synthase beta chain (406 aa).

Lys-99 bears the N6-(pyridoxal phosphate)lysine mark.

Belongs to the TrpB family. Tetramer of two alpha and two beta chains. Pyridoxal 5'-phosphate serves as cofactor.

The catalysed reaction is (1S,2R)-1-C-(indol-3-yl)glycerol 3-phosphate + L-serine = D-glyceraldehyde 3-phosphate + L-tryptophan + H2O. It functions in the pathway amino-acid biosynthesis; L-tryptophan biosynthesis; L-tryptophan from chorismate: step 5/5. Functionally, the beta subunit is responsible for the synthesis of L-tryptophan from indole and L-serine. This chain is Tryptophan synthase beta chain, found in Rhizobium etli (strain CIAT 652).